The following is a 360-amino-acid chain: Glycerol-3-phosphate dehydrogenase [NAD(+)], cytoplasmic (360 aa).

Residues 11–16 (GSGNWG), phenylalanine 98, lysine 121, and alanine 155 each bind NAD(+). Position 121 (lysine 121) interacts with substrate. The active-site Proton acceptor is the lysine 206. Arginine 270 and glutamine 299 together coordinate NAD(+). 270 to 271 (RN) is a substrate binding site.

It belongs to the NAD-dependent glycerol-3-phosphate dehydrogenase family. In terms of assembly, homodimer.

The protein localises to the cytoplasm. The catalysed reaction is sn-glycerol 3-phosphate + NAD(+) = dihydroxyacetone phosphate + NADH + H(+). It participates in phospholipid metabolism; alpha-glycerophosphate cycle. The polypeptide is Glycerol-3-phosphate dehydrogenase [NAD(+)], cytoplasmic (Gpdh1) (Drosophila kanekoi (Fruit fly)).